The chain runs to 353 residues: Fasciclin-like arabinogalactan protein 21 (353 aa).

The signal sequence occupies residues Met-1 to Arg-28. N-linked (GlcNAc...) asparagine glycans are attached at residues Asn-51, Asn-81, Asn-94, Asn-200, Asn-249, and Asn-315. The FAS1 1 domain maps to Thr-83–Leu-181. One can recognise an FAS1 2 domain in the interval Thr-254–His-352.

Belongs to the fasciclin-like AGP family.

It is found in the secreted. In terms of biological role, may be a cell surface adhesion protein. The protein is Fasciclin-like arabinogalactan protein 21 (FLA21) of Arabidopsis thaliana (Mouse-ear cress).